The following is a 188-amino-acid chain: dCTP deaminase (188 aa).

Residues 111-116 (KSTYAR), 135-137 (TLE), Gln-156, Tyr-170, and Gln-180 each bind dCTP. Glu-137 (proton donor/acceptor) is an active-site residue.

Belongs to the dCTP deaminase family. In terms of assembly, homotrimer.

It catalyses the reaction dCTP + H2O + H(+) = dUTP + NH4(+). The protein operates within pyrimidine metabolism; dUMP biosynthesis; dUMP from dCTP (dUTP route): step 1/2. Catalyzes the deamination of dCTP to dUTP. The sequence is that of dCTP deaminase from Neisseria gonorrhoeae (strain ATCC 700825 / FA 1090).